Reading from the N-terminus, the 351-residue chain is MAAAANSGSSLPLFDCPTWAGKPPPGLHLDVVKGDKLIEKLIIDEKKYYLFGRNPDLCDFTIDHQSCSRVHAALVYHKHLKRVFLIDLNSTHGTFLGHIRLEPHKPQQIPIDSTVSFGASTRAYTLREKPQTLPSAVKGDEKMGGEDDELKGLLGLPEEETELDNLTEFNTAHNKRISTLTIEEGNLDIQRPKRKRKNSRVTFSEDDEIINPEDVDPSVGRFRNMVQTAVVPVKKKRVEGPGSLGLEESGSRRMQNFAFSGGLYGGLPPTHSEAGSQPHGIHGTALIGGLPMPYPNLAPDVDLTPVVPSAVNMNPAPNPAVYNPEAVNEPKKKKYAKEAWPGKKPTPSLLI.

Positions 1–142 (MAAAANSGSS…LPSAVKGDEK (142 aa)) are interaction with CDC5L, SF3B1 and MELK. The FHA domain maps to 49 to 101 (YLFGRNPDLCDFTIDHQSCSRVHAALVYHKHLKRVFLIDLNSTHGTFLGHIRL). The tract at residues 143-224 (MGGEDDELKG…VDPSVGRFRN (82 aa)) is interaction with EED. Thr-161 is modified (phosphothreonine). Phosphoserine is present on residues Ser-178 and Ser-199. 2 consecutive short sequence motifs (nuclear localization signal) follow at residues 185–209 (GNLD…DDEI) and 210–240 (INPE…RVEG). The tract at residues 191 to 200 (RPKRKRKNSR) is involved in PP-1 inhibition. The tract at residues 200 to 203 (RVTF) is involved in PP-1 binding. The residue at position 204 (Ser-204) is a Phosphoserine. Ser-249 carries the post-translational modification Phosphoserine. The residue at position 264 (Tyr-264) is a Phosphotyrosine; by LYN; in vitro. Residues 310–329 (AVNMNPAPNPAVYNPEAVNE) form an interaction with EED region. Residues 316-351 (APNPAVYNPEAVNEPKKKKYAKEAWPGKKPTPSLLI) form a disordered region. The segment at 330–351 (PKKKKYAKEAWPGKKPTPSLLI) is RNA-binding. The segment at 331–337 (KKKKYAK) is involved in PP-1 inhibition. Position 335 is a phosphotyrosine (Tyr-335).

Interacts with phosphorylated CDC5L, SF3B1 and MELK. Interacts with EED, in a nucleic acid-stimulated manner. Part of a complex consisting of PPP1R8, EED, HDAC2 and PP-1. Part of the spliceosome. Interacts with PPP1CA, PPP1CB and PPP1CC. Requires Mg(2+) as cofactor. May be inactivated by phosphorylation on Ser-199 or Ser-204. Phosphorylated by Lyn in vitro on Tyr-264, and also on Tyr-335 in the presence of RNA. Ubiquitously expressed, with highest levels in heart and skeletal muscle, followed by brain, placenta, lung, liver and pancreas. Less abundant in kidney. The concentration and ratio between isoforms is cell-type dependent. Isoform Alpha (&gt;90%) and isoform Beta were found in brain, heart and kidney. Isoform Gamma is mainly found in B-cells and T-lymphocytes, and has been found in 293 embryonic kidney cells.

It is found in the nucleus. The protein localises to the nucleus speckle. It localises to the cytoplasm. Functionally, inhibitor subunit of the major nuclear protein phosphatase-1 (PP-1). It has RNA-binding activity but does not cleave RNA and may target PP-1 to RNA-associated substrates. May also be involved in pre-mRNA splicing. Binds DNA and might act as a transcriptional repressor. Seems to be required for cell proliferation. Isoform Gamma is a site-specific single-strand endoribonuclease that cleaves single strand RNA 3' to purines and pyrimidines in A+U-rich regions. It generates 5'-phosphate termini at the site of cleavage. This isoform does not inhibit PP-1. May be implicated in mRNA splicing. The sequence is that of Nuclear inhibitor of protein phosphatase 1 (PPP1R8) from Homo sapiens (Human).